The sequence spans 421 residues: MSKTHLTEQKFSDFALHPKVVEALEKKGFHNCTPIQALALPLTLAGRDVAGQAQTGTGKTMAFLTSTFHYLLSHPAIADRKVNQPRALIMAPTRELAVQIHADAEPLAEATGLKLGLAYGGDGYDKQLKVLESGVDILIGTTGRLIDYAKQNHINLGAIQVVVLDEADRMYDLGFIKDIRWLFRRMPPANQRLNMLFSATLSYRVRELAFEQMNNAEYIEVEPEQKTGHRIKEELFYPSNEEKMRLLQTLIEEEWPDRAIIFANTKHRCEEIWGHLAADGHRVGLLTGDVAQKKRLRILDEFTRGDLDILVATDVAARGLHIPAVTHVFNYDLPDDCEDYVHRIGRTGRAGASGHSISLACEEYALNLPAIETYIGHSIPVSKYNPDALMTDLPKPLRLTRPRTGNGPRRTGTPRNRRRSG.

The Q motif motif lies at 9–37; the sequence is QKFSDFALHPKVVEALEKKGFHNCTPIQA. Positions 40-219 constitute a Helicase ATP-binding domain; the sequence is LPLTLAGRDV…FEQMNNAEYI (180 aa). An ATP-binding site is contributed by 53-60; sequence AQTGTGKT. The DEAD box signature appears at 165–168; that stretch reads DEAD. A Helicase C-terminal domain is found at 245 to 390; that stretch reads RLLQTLIEEE…VSKYNPDALM (146 aa). The disordered stretch occupies residues 392–421; sequence DLPKPLRLTRPRTGNGPRRTGTPRNRRRSG. The span at 402-414 shows a compositional bias: low complexity; it reads PRTGNGPRRTGTP.

This sequence belongs to the DEAD box helicase family. RhlB subfamily. As to quaternary structure, component of the RNA degradosome, which is a multiprotein complex involved in RNA processing and mRNA degradation.

It localises to the cytoplasm. The enzyme catalyses ATP + H2O = ADP + phosphate + H(+). Its function is as follows. DEAD-box RNA helicase involved in RNA degradation. Has RNA-dependent ATPase activity and unwinds double-stranded RNA. This Escherichia coli O17:K52:H18 (strain UMN026 / ExPEC) protein is ATP-dependent RNA helicase RhlB.